The sequence spans 588 residues: Neuropeptide-like 1 (588 aa).

The propeptide occupies 1 to 179 (MQCIPKKTFM…DPEVLEYSPD (179 aa)). The segment at 115–143 (NGDLPITIQERESDNDDEEKRSASSSDNV) is disordered. Threonine 194 carries the post-translational modification Threonine amide. Residues serine 210, serine 227, and serine 244 each carry the serine amide modification. Residue tyrosine 260 is modified to Tyrosine amide. Position 281 is a glutamic acid 1-amide (glutamate 281). Positions 285–299 (SIASLARSGDWPSVA) are excised as a propeptide. Position 318 is a tyrosine amide (tyrosine 318). A propeptide spanning residues 321 to 588 (SLSDDREAPS…SNSHIAPRSM (268 aa)) is cleaved from the precursor. The segment at 342–382 (GNSEGKENEWQATPFTVSEDLDEGKAKNRSNRRIEASQTRH) is disordered.

The protein localises to the secreted. This Camponotus floridanus (Florida carpenter ant) protein is Neuropeptide-like 1.